Reading from the N-terminus, the 362-residue chain is Peptide chain release factor 1 (362 aa).

Q238 is modified (N5-methylglutamine).

Belongs to the prokaryotic/mitochondrial release factor family. Post-translationally, methylated by PrmC. Methylation increases the termination efficiency of RF1.

The protein localises to the cytoplasm. Peptide chain release factor 1 directs the termination of translation in response to the peptide chain termination codons UAG and UAA. This is Peptide chain release factor 1 from Psychrobacter arcticus (strain DSM 17307 / VKM B-2377 / 273-4).